The chain runs to 194 residues: Protein GrpE (194 aa).

Positions 1-14 (MSKMNPNEKKENAS) are enriched in basic and acidic residues. Residues 1–48 (MSKMNPNEKKENASKNENVNNEEATNLQEEQSNAADEAAGSDNVSGEV) form a disordered region. A compositionally biased stretch (polar residues) spans 24–34 (ATNLQEEQSNA).

Belongs to the GrpE family. As to quaternary structure, homodimer.

The protein localises to the cytoplasm. Functionally, participates actively in the response to hyperosmotic and heat shock by preventing the aggregation of stress-denatured proteins, in association with DnaK and GrpE. It is the nucleotide exchange factor for DnaK and may function as a thermosensor. Unfolded proteins bind initially to DnaJ; upon interaction with the DnaJ-bound protein, DnaK hydrolyzes its bound ATP, resulting in the formation of a stable complex. GrpE releases ADP from DnaK; ATP binding to DnaK triggers the release of the substrate protein, thus completing the reaction cycle. Several rounds of ATP-dependent interactions between DnaJ, DnaK and GrpE are required for fully efficient folding. The polypeptide is Protein GrpE (Parabacteroides distasonis (strain ATCC 8503 / DSM 20701 / CIP 104284 / JCM 5825 / NCTC 11152)).